An 858-amino-acid polypeptide reads, in one-letter code: Coiled-coil and C2 domain-containing protein 1B (858 aa).

Disordered regions lie at residues 112–164, 180–199, 204–284, 329–352, and 470–533; these read VLGV…GASQ, AAAS…CERG, ESQL…ALLS, VDLS…APTA, and EKLA…SPSV. Acidic residues predominate over residues 114–143; that stretch reads GVDEETEPLDGDEVADPGGSEEENGLEDTE. The segment covering 153–164 has biased composition (low complexity); it reads ASAPAAQAGASQ. The stretch at 166-212 forms a coiled coil; that stretch reads LHALLEERIHNYREAAASAKEAGEAAKARRCERGLKTLESQLASVRR. Residues 186–199 show a composition bias toward basic and acidic residues; the sequence is EAGEAAKARRCERG. Position 209 is a phosphoserine (serine 209). Over residues 520-532 the composition is skewed to low complexity; that stretch reads PRASSSKESPSPS. Serine 593 is subject to Phosphoserine. Threonine 596 carries the phosphothreonine modification. Positions 611–635 form a coiled coil; the sequence is RLSQKAEEVYAQLQKMLLEQQEKCL. Residues 676–815 enclose the C2 domain; that stretch reads DPPTHHFELK…ENECEIREIV (140 aa).

The protein belongs to the CC2D1 family. As to quaternary structure, interacts with CHMP4B. Widely distributed in brain and peripheral tissues.

Its subcellular location is the nucleus. Functionally, transcription factor that binds specifically to the DRE (dual repressor element) and represses HTR1A gene transcription in neuronal cells. The protein is Coiled-coil and C2 domain-containing protein 1B (CC2D1B) of Homo sapiens (Human).